Consider the following 586-residue polypeptide: Phosphomethylpyrimidine synthase (586 aa).

Disordered regions lie at residues 38 to 59 (IELS…TSGP) and 92 to 114 (GREI…VFPQ). A compositionally biased stretch (basic and acidic residues) spans 92 to 102 (GREIKPEDDGV). Substrate is bound by residues Asn-193, Met-222, Tyr-251, His-287, 307-309 (SRG), 348-351 (DGLR), and Glu-387. Residue His-391 coordinates Zn(2+). Residue Tyr-414 participates in substrate binding. Zn(2+) is bound at residue His-455. [4Fe-4S] cluster is bound by residues Cys-535, Cys-538, and Cys-543.

The protein belongs to the ThiC family. Requires [4Fe-4S] cluster as cofactor.

It catalyses the reaction 5-amino-1-(5-phospho-beta-D-ribosyl)imidazole + S-adenosyl-L-methionine = 4-amino-2-methyl-5-(phosphooxymethyl)pyrimidine + CO + 5'-deoxyadenosine + formate + L-methionine + 3 H(+). It participates in cofactor biosynthesis; thiamine diphosphate biosynthesis. Its function is as follows. Catalyzes the synthesis of the hydroxymethylpyrimidine phosphate (HMP-P) moiety of thiamine from aminoimidazole ribotide (AIR) in a radical S-adenosyl-L-methionine (SAM)-dependent reaction. In Bacillus cytotoxicus (strain DSM 22905 / CIP 110041 / 391-98 / NVH 391-98), this protein is Phosphomethylpyrimidine synthase.